The sequence spans 807 residues: Serine/threonine-protein kinase B-raf (807 aa).

2 stretches are compositionally biased toward low complexity: residues 1 to 15 (MAAL…GASL) and 110 to 128 (SVSS…SSSL). 2 disordered regions span residues 1-36 (MAAL…YAGS) and 104-128 (GNGT…SSSL). Residues 155–227 (PIVRVFLPNK…TGEELHVEVL (73 aa)) enclose the RBD domain. The segment at 234–280 (THNFVRKTFFTLAFCDFCRKLLFQGFRCQTCGYKFHQRCSTEVPLMC) adopts a Phorbol-ester/DAG-type zinc-finger fold. Positions 235, 248, 251, 261, 264, 269, 272, and 280 each coordinate Zn(2+). Residues 303–313 (EETTLGETTPA) are compositionally biased toward polar residues. Disordered stretches follow at residues 303–372 (EETT…VHIN) and 434–494 (STAG…EIPD). Residues 314-328 (SGSYPSVPPSDSVGP) show a composition bias toward low complexity. Basic and acidic residues-rich tracts occupy residues 348–363 (PADE…RDRS) and 463–487 (QRER…RDSS). The 261-residue stretch at 497–757 (ITVGQRIGSG…PQILASIELL (261 aa)) folds into the Protein kinase domain. Residues 503 to 511 (IGSGSFGTV) and Lys523 each bind ATP. Residue Asp616 is the Proton acceptor of the active site. Ser790 bears the Phosphoserine; by MAPK1 mark. The residue at position 793 (Thr793) is a Phosphothreonine; by MAPK1.

Belongs to the protein kinase superfamily. TKL Ser/Thr protein kinase family. RAF subfamily. Zn(2+) is required as a cofactor. Post-translationally, phosphorylated. As to expression, expressed preferentially in neural tissue.

Its subcellular location is the nucleus. The protein localises to the cytoplasm. It localises to the cell membrane. It catalyses the reaction L-seryl-[protein] + ATP = O-phospho-L-seryl-[protein] + ADP + H(+). It carries out the reaction L-threonyl-[protein] + ATP = O-phospho-L-threonyl-[protein] + ADP + H(+). Its activity is regulated as follows. In quiescent cells, maintained in an inactive state via an intramolecular interaction between the protein kinase and N-terminal domains. Following mitogen-mediated cell activation, binds via its RGB domain to active HRAS (GTP-bound) which releases the inhibitory intramolecular interaction between the two domains. This allows the MAP2K1-mediated dimerization of KSR1 or KSR2, and BRAF which activates BRAF. Functionally, protein kinase involved in the activation of the MAP signaling cascade. May play a role in transducing specific signals in neural cells. This is Serine/threonine-protein kinase B-raf from Coturnix japonica (Japanese quail).